Here is a 156-residue protein sequence, read N- to C-terminus: Small ribosomal subunit protein uS7 (156 aa).

It belongs to the universal ribosomal protein uS7 family. Part of the 30S ribosomal subunit. Contacts proteins S9 and S11.

Its function is as follows. One of the primary rRNA binding proteins, it binds directly to 16S rRNA where it nucleates assembly of the head domain of the 30S subunit. Is located at the subunit interface close to the decoding center, probably blocks exit of the E-site tRNA. In Erwinia tasmaniensis (strain DSM 17950 / CFBP 7177 / CIP 109463 / NCPPB 4357 / Et1/99), this protein is Small ribosomal subunit protein uS7.